Consider the following 340-residue polypeptide: Heat-inducible transcription repressor HrcA (340 aa).

It belongs to the HrcA family.

In terms of biological role, negative regulator of class I heat shock genes (grpE-dnaK-dnaJ and groELS operons). Prevents heat-shock induction of these operons. The chain is Heat-inducible transcription repressor HrcA from Burkholderia thailandensis (strain ATCC 700388 / DSM 13276 / CCUG 48851 / CIP 106301 / E264).